Reading from the N-terminus, the 770-residue chain is Rho guanine nucleotide exchange factor 38 (770 aa).

The segment at 33-88 (KTDTVVDSSVSGDHSGSLRRSQSDRTEYNQKLQEKMTPQAECSSAETPTPEDEQQV) is disordered. Phosphothreonine is present on T34. Residues 37–47 (VVDSSVSGDHS) show a composition bias toward low complexity. The segment covering 53-66 (SQSDRTEYNQKLQE) has biased composition (basic and acidic residues). In terms of domain architecture, DH spans 94 to 285 (KRAKIIRELI…KDINVNINEL (192 aa)). Residues 327–542 (LKILTRGESQ…VHSLTFVKEN (216 aa)) enclose the BAR domain. SH3 domains are found at residues 581 to 644 (GAEE…PHNP) and 706 to 769 (VDEQ…KMTY).

Its function is as follows. May act as a guanine-nucleotide releasing factor. This chain is Rho guanine nucleotide exchange factor 38 (Arhgef38), found in Mus musculus (Mouse).